The following is a 140-amino-acid chain: Nucleoside diphosphate kinase (140 aa).

6 residues coordinate ATP: Lys11, Phe59, Arg87, Thr93, Arg104, and Asn114. His117 functions as the Pros-phosphohistidine intermediate in the catalytic mechanism.

The protein belongs to the NDK family. As to quaternary structure, homotetramer. Mg(2+) is required as a cofactor.

It is found in the cytoplasm. It carries out the reaction a 2'-deoxyribonucleoside 5'-diphosphate + ATP = a 2'-deoxyribonucleoside 5'-triphosphate + ADP. It catalyses the reaction a ribonucleoside 5'-diphosphate + ATP = a ribonucleoside 5'-triphosphate + ADP. Major role in the synthesis of nucleoside triphosphates other than ATP. The ATP gamma phosphate is transferred to the NDP beta phosphate via a ping-pong mechanism, using a phosphorylated active-site intermediate. The sequence is that of Nucleoside diphosphate kinase from Methylobacterium nodulans (strain LMG 21967 / CNCM I-2342 / ORS 2060).